The following is a 281-amino-acid chain: Trypsin zeta (281 aa).

Positions 1–23 (MSSSSWLGCLLAVLLSALALSQG) are cleaved as a signal peptide. The propeptide at 24–39 (LPLLEDLDENSFPDGR) is activation peptide. The Peptidase S1 domain maps to 40-279 (IVGGYVTDIA…LRPWIDAVRA (240 aa)). Cysteines 73 and 89 form a disulfide. Catalysis depends on charge relay system residues His-88 and Asp-135. Cystine bridges form between Cys-199–Cys-219 and Cys-231–Cys-255. The active-site Charge relay system is the Ser-235.

The protein belongs to the peptidase S1 family.

It is found in the secreted. Its subcellular location is the extracellular space. It catalyses the reaction Preferential cleavage: Arg-|-Xaa, Lys-|-Xaa.. This chain is Trypsin zeta (zetaTry), found in Drosophila erecta (Fruit fly).